The following is a 97-amino-acid chain: Aspartyl/glutamyl-tRNA(Asn/Gln) amidotransferase subunit C (97 aa).

Belongs to the GatC family. In terms of assembly, heterotrimer of A, B and C subunits.

The enzyme catalyses L-glutamyl-tRNA(Gln) + L-glutamine + ATP + H2O = L-glutaminyl-tRNA(Gln) + L-glutamate + ADP + phosphate + H(+). It carries out the reaction L-aspartyl-tRNA(Asn) + L-glutamine + ATP + H2O = L-asparaginyl-tRNA(Asn) + L-glutamate + ADP + phosphate + 2 H(+). Its function is as follows. Allows the formation of correctly charged Asn-tRNA(Asn) or Gln-tRNA(Gln) through the transamidation of misacylated Asp-tRNA(Asn) or Glu-tRNA(Gln) in organisms which lack either or both of asparaginyl-tRNA or glutaminyl-tRNA synthetases. The reaction takes place in the presence of glutamine and ATP through an activated phospho-Asp-tRNA(Asn) or phospho-Glu-tRNA(Gln). The protein is Aspartyl/glutamyl-tRNA(Asn/Gln) amidotransferase subunit C of Thermosynechococcus vestitus (strain NIES-2133 / IAM M-273 / BP-1).